The primary structure comprises 298 residues: Bifunctional protein FolD (298 aa).

NADP(+)-binding positions include 165 to 167 (GRS), Ser-190, and Ile-231.

Belongs to the tetrahydrofolate dehydrogenase/cyclohydrolase family. In terms of assembly, homodimer.

It catalyses the reaction (6R)-5,10-methylene-5,6,7,8-tetrahydrofolate + NADP(+) = (6R)-5,10-methenyltetrahydrofolate + NADPH. The catalysed reaction is (6R)-5,10-methenyltetrahydrofolate + H2O = (6R)-10-formyltetrahydrofolate + H(+). The protein operates within one-carbon metabolism; tetrahydrofolate interconversion. Functionally, catalyzes the oxidation of 5,10-methylenetetrahydrofolate to 5,10-methenyltetrahydrofolate and then the hydrolysis of 5,10-methenyltetrahydrofolate to 10-formyltetrahydrofolate. This chain is Bifunctional protein FolD, found in Prochlorococcus marinus (strain MIT 9515).